A 311-amino-acid polypeptide reads, in one-letter code: Malate dehydrogenase (311 aa).

NAD(+)-binding positions include 7-13 and Asp-34; that span reads GAAGGIG. Arg-81 and Arg-87 together coordinate substrate. NAD(+) contacts are provided by residues Asn-94 and 117 to 119; that span reads ITN. 2 residues coordinate substrate: Asn-119 and Arg-153. The active-site Proton acceptor is His-177. Met-227 contributes to the NAD(+) binding site.

It belongs to the LDH/MDH superfamily. MDH type 1 family. In terms of assembly, homodimer.

The catalysed reaction is (S)-malate + NAD(+) = oxaloacetate + NADH + H(+). Functionally, catalyzes the reversible oxidation of malate to oxaloacetate. This chain is Malate dehydrogenase, found in Haemophilus influenzae (strain 86-028NP).